The following is a 400-amino-acid chain: Formate-dependent phosphoribosylglycinamide formyltransferase (400 aa).

N(1)-(5-phospho-beta-D-ribosyl)glycinamide contacts are provided by residues glutamate 22–leucine 23 and glutamate 82. Residues arginine 115, lysine 156, serine 161–glutamine 166, glutamate 196–isoleucine 199, and glutamate 204 each bind ATP. Positions arginine 120 to leucine 309 constitute an ATP-grasp domain. Glutamate 268 and glutamate 280 together coordinate Mg(2+). N(1)-(5-phospho-beta-D-ribosyl)glycinamide-binding positions include aspartate 287, lysine 361, and arginine 368–arginine 369.

The protein belongs to the PurK/PurT family. Homodimer.

The catalysed reaction is N(1)-(5-phospho-beta-D-ribosyl)glycinamide + formate + ATP = N(2)-formyl-N(1)-(5-phospho-beta-D-ribosyl)glycinamide + ADP + phosphate + H(+). The protein operates within purine metabolism; IMP biosynthesis via de novo pathway; N(2)-formyl-N(1)-(5-phospho-D-ribosyl)glycinamide from N(1)-(5-phospho-D-ribosyl)glycinamide (formate route): step 1/1. In terms of biological role, involved in the de novo purine biosynthesis. Catalyzes the transfer of formate to 5-phospho-ribosyl-glycinamide (GAR), producing 5-phospho-ribosyl-N-formylglycinamide (FGAR). Formate is provided by PurU via hydrolysis of 10-formyl-tetrahydrofolate. The chain is Formate-dependent phosphoribosylglycinamide formyltransferase from Xanthomonas oryzae pv. oryzae (strain PXO99A).